A 269-amino-acid polypeptide reads, in one-letter code: Tryptophan synthase alpha chain (269 aa).

Catalysis depends on proton acceptor residues glutamate 50 and aspartate 61.

It belongs to the TrpA family. In terms of assembly, tetramer of two alpha and two beta chains.

It catalyses the reaction (1S,2R)-1-C-(indol-3-yl)glycerol 3-phosphate + L-serine = D-glyceraldehyde 3-phosphate + L-tryptophan + H2O. It functions in the pathway amino-acid biosynthesis; L-tryptophan biosynthesis; L-tryptophan from chorismate: step 5/5. Its function is as follows. The alpha subunit is responsible for the aldol cleavage of indoleglycerol phosphate to indole and glyceraldehyde 3-phosphate. This Buchnera aphidicola subsp. Baizongia pistaciae (strain Bp) protein is Tryptophan synthase alpha chain.